Reading from the N-terminus, the 316-residue chain is Malate dehydrogenase (316 aa).

Residues 12–17 (GAGNIG) and D36 contribute to the NAD(+) site. Substrate is bound by residues R85 and R91. Residues N98 and 121 to 123 (VTN) each bind NAD(+). Positions 123 and 154 each coordinate substrate. Catalysis depends on H178, which acts as the Proton acceptor.

The protein belongs to the LDH/MDH superfamily. MDH type 3 family.

The enzyme catalyses (S)-malate + NAD(+) = oxaloacetate + NADH + H(+). Catalyzes the reversible oxidation of malate to oxaloacetate. The protein is Malate dehydrogenase of Wolbachia pipientis wMel.